We begin with the raw amino-acid sequence, 309 residues long: MALRLSFMGTPDFAVPVLHALLNAGHDIVAVYSQPPRPAGRRGLQLVSSPVQNAAEAKSIPVFTPQSLKTAEEQARFAALSVDAAVVVAYGILLPKAILEAPRFGCFNAHASLLPRWRGAAPIQRAIMAGDKETGMMIMQMNEGLDTGPIALSRSIAITENITAAELSDKLSHMGAELIVEALSALEKGQLTLTPQSLEGVSYASKIKKEETQIDWTKSAEVIHKYICALSPYPGCWCTMTIGGKPERVKILGSRLATGDSLGIGRIEAGHLIIHCGQGRIEITHLQRAGSRILDSSTFLRGANISAVF.

112 to 115 (SLLP) is a (6S)-5,6,7,8-tetrahydrofolate binding site.

Belongs to the Fmt family.

It catalyses the reaction L-methionyl-tRNA(fMet) + (6R)-10-formyltetrahydrofolate = N-formyl-L-methionyl-tRNA(fMet) + (6S)-5,6,7,8-tetrahydrofolate + H(+). Functionally, attaches a formyl group to the free amino group of methionyl-tRNA(fMet). The formyl group appears to play a dual role in the initiator identity of N-formylmethionyl-tRNA by promoting its recognition by IF2 and preventing the misappropriation of this tRNA by the elongation apparatus. This chain is Methionyl-tRNA formyltransferase, found in Bartonella bacilliformis (strain ATCC 35685 / KC583 / Herrer 020/F12,63).